Consider the following 540-residue polypeptide: CTP synthase (540 aa).

The segment at 1–267 (MKIMKFIFIT…GKLVTKKLNL (267 aa)) is amidoligase domain. Position 15 (Ser15) interacts with CTP. Residue Ser15 participates in UTP binding. Position 16–21 (16–21 (SLGKGI)) interacts with ATP. Tyr56 contacts L-glutamine. An ATP-binding site is contributed by Asp73. Mg(2+) is bound by residues Asp73 and Glu141. CTP-binding positions include 148-150 (DIE), 188-193 (KTKPTQ), and Lys224. Residues 188–193 (KTKPTQ) and Lys224 each bind UTP. 240–242 (RDA) contributes to the ATP binding site. Residues 292 to 540 (TIGIVGKYVE…VRASLGEKIK (249 aa)) enclose the Glutamine amidotransferase type-1 domain. Gly360 is an L-glutamine binding site. The Nucleophile; for glutamine hydrolysis role is filled by Cys387. Residues 388–391 (MGMQ), Glu411, and Arg468 each bind L-glutamine. Residues His513 and Glu515 contribute to the active site.

It belongs to the CTP synthase family. In terms of assembly, homotetramer.

It catalyses the reaction UTP + L-glutamine + ATP + H2O = CTP + L-glutamate + ADP + phosphate + 2 H(+). The enzyme catalyses L-glutamine + H2O = L-glutamate + NH4(+). The catalysed reaction is UTP + NH4(+) + ATP = CTP + ADP + phosphate + 2 H(+). The protein operates within pyrimidine metabolism; CTP biosynthesis via de novo pathway; CTP from UDP: step 2/2. Allosterically activated by GTP, when glutamine is the substrate; GTP has no effect on the reaction when ammonia is the substrate. The allosteric effector GTP functions by stabilizing the protein conformation that binds the tetrahedral intermediate(s) formed during glutamine hydrolysis. Inhibited by the product CTP, via allosteric rather than competitive inhibition. Catalyzes the ATP-dependent amination of UTP to CTP with either L-glutamine or ammonia as the source of nitrogen. Regulates intracellular CTP levels through interactions with the four ribonucleotide triphosphates. This is CTP synthase from Methanocaldococcus jannaschii (strain ATCC 43067 / DSM 2661 / JAL-1 / JCM 10045 / NBRC 100440) (Methanococcus jannaschii).